We begin with the raw amino-acid sequence, 64 residues long: Putative antitoxin AF_1074 (64 aa).

Belongs to the UPF0165 family.

In terms of biological role, possibly the antitoxin component of a type II toxin-antitoxin (TA) system. The chain is Putative antitoxin AF_1074 from Archaeoglobus fulgidus (strain ATCC 49558 / DSM 4304 / JCM 9628 / NBRC 100126 / VC-16).